An 803-amino-acid chain; its full sequence is Homeobox protein Wariai (803 aa).

Positions 23 to 41 (SDYDSYEQQYNNPTGSKQY) are enriched in polar residues. The tract at residues 23-144 (SDYDSYEQQY…PTPYSSNSFS (122 aa)) is disordered. Residues 42-124 (NNNNNNNTNT…NNNNNNNNNN (83 aa)) show a composition bias toward low complexity. Positions 125–138 (QHLSQSQQLSPTPY) are enriched in polar residues. A DNA-binding region (homeobox) is located at residues 162–221 (SKKKRKRTSPDQLKLLEKIFMAHQHPNLNLRSQLAVELHMTARSVQIWFQNRRAKARNME). The interval 288–330 (INGNMGGGGGGGGGSHNHHHHNHNHNHHNHNHNHNHNQPLSNG) is disordered. Residues 291-302 (NMGGGGGGGGGS) show a composition bias toward gly residues. Residues 303–322 (HNHHHHNHNHNHHNHNHNHN) show a composition bias toward basic residues. ANK repeat units lie at residues 374–403 (KGLSLLFTAAFLGYEYQVRRLIESGANPNI), 407–436 (QGNTPLIAASVLGNQPIVELLLEHRADPNL), 440–469 (EGVSPLFSACKGGHLQIASSLLDHDAEVSV), 474–503 (NGETPLHIASLKGFEKICKLLIETEAKASV), 507–536 (NNRTPLHHACIMGYFSIAKLLICNGADMNA), 540–569 (DGHTPLHTSSLMGHDLITRLLLENGADPNI), 573–602 (EGYTPIHYAVRESRIETVKFLIKFNSKLNI), 606–636 (NGQNLIHLSVQFASLMMGQMIFESKGCEIAA), and 642–671 (QGYTPLYLAAKAGKTNFVKYLLSKGASKKI). The tract at residues 695 to 760 (KSSNNNNSNS…PPGNKFEEDD (66 aa)) is disordered. A compositionally biased stretch (low complexity) spans 696-746 (SSNNNNSNSNINNINNINNINNINSQPNTNSDNNNNNNNNNFNENYSNGNN).

It is found in the nucleus. Functionally, putative transcription factor, that seems to be involved in anterior-posterior patterning of the slug, probably by controlling the proportions of prestalk and prespore cells. The protein is Homeobox protein Wariai (warA) of Dictyostelium discoideum (Social amoeba).